The following is a 337-amino-acid chain: Glyceraldehyde-3-phosphate dehydrogenase (337 aa).

NAD(+) is bound by residues 12-13 (RI), D34, and K79. Residues 150–152 (SCT), T181, 210–211 (TG), and R233 each bind D-glyceraldehyde 3-phosphate. The active-site Nucleophile is C151. N315 serves as a coordination point for NAD(+).

Belongs to the glyceraldehyde-3-phosphate dehydrogenase family. As to quaternary structure, homotetramer.

Its subcellular location is the cytoplasm. The enzyme catalyses D-glyceraldehyde 3-phosphate + phosphate + NAD(+) = (2R)-3-phospho-glyceroyl phosphate + NADH + H(+). The protein operates within carbohydrate degradation; glycolysis; pyruvate from D-glyceraldehyde 3-phosphate: step 1/5. This Cochliobolus lunatus (Filamentous fungus) protein is Glyceraldehyde-3-phosphate dehydrogenase (GPD).